Here is a 307-residue protein sequence, read N- to C-terminus: Thioredoxin reductase (307 aa).

36 to 43 is a binding site for FAD; sequence DNAAPGGK. Cys138 and Cys141 are disulfide-bonded. An FAD-binding site is contributed by 278 to 287; that stretch reads DIRIKDIRQI.

It belongs to the class-II pyridine nucleotide-disulfide oxidoreductase family. As to quaternary structure, homodimer. It depends on FAD as a cofactor.

The protein localises to the cytoplasm. It carries out the reaction [thioredoxin]-dithiol + NADP(+) = [thioredoxin]-disulfide + NADPH + H(+). The chain is Thioredoxin reductase (trxB) from Mycoplasmopsis pulmonis (strain UAB CTIP) (Mycoplasma pulmonis).